Consider the following 566-residue polypeptide: Urease subunit alpha (566 aa).

The Urease domain occupies 128-566; it reads GGIDSHVHFI…LPMAQRYFLF (439 aa). His-133, His-135, and Lys-216 together coordinate Ni(2+). Position 216 is an N6-carboxylysine (Lys-216). Substrate is bound at residue His-218. Ni(2+)-binding residues include His-245 and His-271. Catalysis depends on His-319, which acts as the Proton donor. Position 359 (Asp-359) interacts with Ni(2+).

Belongs to the metallo-dependent hydrolases superfamily. Urease alpha subunit family. In terms of assembly, heterotrimer of UreA (gamma), UreB (beta) and UreC (alpha) subunits. Three heterotrimers associate to form the active enzyme. The cofactor is Ni cation. Post-translationally, carboxylation allows a single lysine to coordinate two nickel ions.

It localises to the cytoplasm. The catalysed reaction is urea + 2 H2O + H(+) = hydrogencarbonate + 2 NH4(+). It functions in the pathway nitrogen metabolism; urea degradation; CO(2) and NH(3) from urea (urease route): step 1/1. The chain is Urease subunit alpha from Nitrosococcus oceani (strain ATCC 19707 / BCRC 17464 / JCM 30415 / NCIMB 11848 / C-107).